A 178-amino-acid polypeptide reads, in one-letter code: uncharacterized protein (178 aa).

The first 23 residues, Met1–Ser23, serve as a signal peptide directing secretion.

This is an uncharacterized protein from Haemophilus influenzae (strain ATCC 51907 / DSM 11121 / KW20 / Rd).